A 491-amino-acid chain; its full sequence is Glutamyl-tRNA(Gln) amidotransferase subunit A (491 aa).

Active-site charge relay system residues include lysine 76 and serine 154. Residue serine 178 is the Acyl-ester intermediate of the active site.

This sequence belongs to the amidase family. GatA subfamily. Heterotrimer of A, B and C subunits.

It carries out the reaction L-glutamyl-tRNA(Gln) + L-glutamine + ATP + H2O = L-glutaminyl-tRNA(Gln) + L-glutamate + ADP + phosphate + H(+). In terms of biological role, allows the formation of correctly charged Gln-tRNA(Gln) through the transamidation of misacylated Glu-tRNA(Gln) in organisms which lack glutaminyl-tRNA synthetase. The reaction takes place in the presence of glutamine and ATP through an activated gamma-phospho-Glu-tRNA(Gln). This chain is Glutamyl-tRNA(Gln) amidotransferase subunit A, found in Cereibacter sphaeroides (strain ATCC 17029 / ATH 2.4.9) (Rhodobacter sphaeroides).